The sequence spans 167 residues: Ureidoglycolate lyase (167 aa).

The protein belongs to the ureidoglycolate lyase family. In terms of assembly, homodimer. Requires Ni(2+) as cofactor.

It catalyses the reaction (S)-ureidoglycolate = urea + glyoxylate. The protein operates within nitrogen metabolism; (S)-allantoin degradation. In terms of biological role, catalyzes the catabolism of the allantoin degradation intermediate (S)-ureidoglycolate, generating urea and glyoxylate. Involved in the utilization of allantoin as nitrogen source. In Pseudomonas putida (strain W619), this protein is Ureidoglycolate lyase.